Here is a 78-residue protein sequence, read N- to C-terminus: Cytochrome b-c1 complex subunit 10, mitochondrial (78 aa).

Topologically, residues 1–26 (MVSYVKGPAYKALSHFGKLNAPLVRS) are mitochondrial matrix. The chain crosses the membrane as a helical span at residues 27 to 46 (YIPNLVFWGAAAGGAVATFT). Residues 47–78 (EGVPLFQKTFYEKIPFFGQHWIYNPDPEDVPV) lie on the Mitochondrial intermembrane side of the membrane.

It belongs to the UQCR11/QCR10 family. Component of the ubiquinol-cytochrome c oxidoreductase (cytochrome b-c1 complex, complex III, CIII), a multisubunit enzyme composed of 10 subunits. The complex is composed of 3 respiratory subunits cytochrome b (COB), cytochrome c1 (CYT1) and Rieske protein (RIP1), 2 core protein subunits COR1 and QCR2, and 5 low-molecular weight protein subunits QCR6, QCR7, QCR8, QCR9 and QCR10. The complex exists as an obligatory dimer and forms supercomplexes (SCs) in the inner mitochondrial membrane with a monomer or a dimer of cytochrome c oxidase (complex IV, CIV), resulting in 2 different assemblies (supercomplexes III(2)IV and III(2)IV(2)).

The protein localises to the mitochondrion inner membrane. Functionally, component of the ubiquinol-cytochrome c oxidoreductase, a multisubunit transmembrane complex that is part of the mitochondrial electron transport chain which drives oxidative phosphorylation. The complex plays an important role in the uptake of multiple carbon sources present in different host niches. This chain is Cytochrome b-c1 complex subunit 10, mitochondrial, found in Candida albicans (strain SC5314 / ATCC MYA-2876) (Yeast).